We begin with the raw amino-acid sequence, 86 residues long: Exodeoxyribonuclease 7 small subunit (86 aa).

The protein belongs to the XseB family. As to quaternary structure, heterooligomer composed of large and small subunits.

The protein localises to the cytoplasm. It catalyses the reaction Exonucleolytic cleavage in either 5'- to 3'- or 3'- to 5'-direction to yield nucleoside 5'-phosphates.. Bidirectionally degrades single-stranded DNA into large acid-insoluble oligonucleotides, which are then degraded further into small acid-soluble oligonucleotides. This is Exodeoxyribonuclease 7 small subunit from Agrobacterium fabrum (strain C58 / ATCC 33970) (Agrobacterium tumefaciens (strain C58)).